A 339-amino-acid polypeptide reads, in one-letter code: Heat-inducible transcription repressor HrcA (339 aa).

The protein belongs to the HrcA family.

In terms of biological role, negative regulator of class I heat shock genes (grpE-dnaK-dnaJ and groELS operons). Prevents heat-shock induction of these operons. This chain is Heat-inducible transcription repressor HrcA, found in Acidothermus cellulolyticus (strain ATCC 43068 / DSM 8971 / 11B).